The chain runs to 301 residues: Protein KTI12 homolog (301 aa).

Residue 8–15 (GQPCSGKS) coordinates ATP. Residues 262–275 (LRRTFIKLAGQYSL) are calmodulin-binding.

The protein belongs to the KTI12 family. In terms of assembly, interacts with the elongator complex. Binds to calmodulin in a calcium-dependent manner.

It localises to the cytoplasm. The protein resides in the nucleus. Elongator complex-associated factor that is not a structural subunit but rather transiently contacts the complex. Regulates both meristem activity and organ growth; acts as a positive regulator of adaxial leaf patterning. Required for an early step in synthesis of 5-carbamoylmethyl (ncm5) groups present on uridines (ncm5U) at the wobble position in tRNA. This Oryza sativa subsp. indica (Rice) protein is Protein KTI12 homolog.